The following is a 186-amino-acid chain: Small ribosomal subunit protein uS5 (186 aa).

In terms of domain architecture, S5 DRBM spans F20 to V83.

The protein belongs to the universal ribosomal protein uS5 family. As to quaternary structure, part of the 30S ribosomal subunit. Contacts proteins S4 and S8.

In terms of biological role, with S4 and S12 plays an important role in translational accuracy. Its function is as follows. Located at the back of the 30S subunit body where it stabilizes the conformation of the head with respect to the body. This chain is Small ribosomal subunit protein uS5, found in Brucella abortus (strain S19).